Reading from the N-terminus, the 476-residue chain is PRAME family member 6 (476 aa).

The stretch at 97–124 is one LRR 1; degenerate repeat; that stretch reads RWKLQVLDLQDVCENFWMVWSEAMARGC. One copy of the LRR 2; degenerate repeat lies at 179–203; it reads HLCCKKLKILGMPFRNIRSILKMVN. One copy of the LRR 3; degenerate repeat lies at 204–230; that stretch reads LDCIQEVEVNCKWVLPILTQFTPYLGH. The LRR 4; degenerate repeat unit spans residues 231–266; it reads MRNLQKLVLSHMDVSRYVSPEQKKEIVTQFTTQFLK. LRR repeat units follow at residues 267-292, 293-324, 325-345, 349-376, and 377-401; these read LCCL…LSCL, KTSL…SQLK, TLDL…QILL, AATL…ALSR, and CFEL…LLSH.

This sequence belongs to the PRAME family. As to quaternary structure, component of a CRL2 E3 ubiquitin-protein ligase complex, also named ECS (Elongin BC-CUL2/5-SOCS-box protein) complex, composed of CUL2, Elongin BC (ELOB and ELOC), RBX1 and substrate-specific adapter PRAMEF6.

It functions in the pathway protein modification; protein ubiquitination. Its function is as follows. Substrate-recognition component of a Cul2-RING (CRL2) E3 ubiquitin-protein ligase complex, which mediates ubiquitination of target proteins, leading to their degradation. The CRL2(PRAMEF6) complex mediates ubiquitination and degradation of truncated MSRB1/SEPX1 selenoproteins produced by failed UGA/Sec decoding. This is PRAME family member 6 from Homo sapiens (Human).